We begin with the raw amino-acid sequence, 352 residues long: 4-hydroxy-2-oxovalerate aldolase (352 aa).

One can recognise a Pyruvate carboxyltransferase domain in the interval 13-265 (VRLTDTSLRD…KTGIDFFDIA (253 aa)). 21 to 22 (RD) serves as a coordination point for substrate. Asp22 contacts Mn(2+). Residue His25 is the Proton acceptor of the active site. Residues Ser175 and His204 each coordinate substrate. Mn(2+)-binding residues include His204 and His206. Residue Tyr295 coordinates substrate.

Belongs to the 4-hydroxy-2-oxovalerate aldolase family.

The catalysed reaction is (S)-4-hydroxy-2-oxopentanoate = acetaldehyde + pyruvate. The sequence is that of 4-hydroxy-2-oxovalerate aldolase from Mycolicibacterium paratuberculosis (strain ATCC BAA-968 / K-10) (Mycobacterium paratuberculosis).